The sequence spans 691 residues: Guanylate cyclase soluble subunit alpha-1 (691 aa).

At Ser267 the chain carries Phosphoserine. The region spanning Val480–Phe607 is the Guanylate cyclase domain.

Belongs to the adenylyl cyclase class-4/guanylyl cyclase family. As to quaternary structure, the active enzyme is formed by a heterodimer of an alpha and a beta subunit. Heterodimer with GUCY1B1. It depends on Mg(2+) as a cofactor. The cofactor is Mn(2+).

Its subcellular location is the cytoplasm. The catalysed reaction is GTP = 3',5'-cyclic GMP + diphosphate. Activated by nitric oxide in the presence of magnesium or manganese ions. This chain is Guanylate cyclase soluble subunit alpha-1 (Gucy1a1), found in Mus musculus (Mouse).